A 150-amino-acid chain; its full sequence is Macrodomain Ter protein (150 aa).

Belongs to the MatP family. Homodimer.

Its subcellular location is the cytoplasm. Functionally, required for spatial organization of the terminus region of the chromosome (Ter macrodomain) during the cell cycle. Prevents early segregation of duplicated Ter macrodomains during cell division. Binds specifically to matS, which is a 13 bp signature motif repeated within the Ter macrodomain. The protein is Macrodomain Ter protein of Klebsiella pneumoniae (strain 342).